A 660-amino-acid chain; its full sequence is DNA primase (660 aa).

The CHC2-type zinc finger occupies 40–64; the sequence is CPFHKEKTPSFTVSPDKQFYYCFGC. The disordered stretch occupies residues 94 to 115; it reads GMEVPREQGRRDQKPRQPTDSP. Over residues 97-110 the composition is skewed to basic and acidic residues; that stretch reads VPREQGRRDQKPRQ. In terms of domain architecture, Toprim spans 261–343; that stretch reads DEIIVVEGYM…GRRARFLFLP (83 aa). 3 residues coordinate Mg(2+): E267, D311, and D313. 2 disordered regions span residues 425–449 and 476–519; these read DPQQ…DPGY and QAWK…APVE. Polar residues predominate over residues 428–442; it reads QVEQLAQQAPATSSM. The segment covering 488 to 498 has biased composition (basic and acidic residues); it reads PWSDKPWDKNR.

It belongs to the DnaG primase family. Monomer. Interacts with DnaB. Zn(2+) serves as cofactor. It depends on Mg(2+) as a cofactor.

The enzyme catalyses ssDNA + n NTP = ssDNA/pppN(pN)n-1 hybrid + (n-1) diphosphate.. Functionally, RNA polymerase that catalyzes the synthesis of short RNA molecules used as primers for DNA polymerase during DNA replication. This chain is DNA primase, found in Pseudomonas putida (strain ATCC 47054 / DSM 6125 / CFBP 8728 / NCIMB 11950 / KT2440).